The following is a 569-amino-acid chain: MTSENNPLRHTALFPSTTAVERWAIPGLILAFVMFYLLPLMSHGLWIPDETRYGQISQEMLLSGNWVAPHFMGIRYFEKPIAGYWMIAIGQAIFGDNLFGVRIASALSTGVSVWLTYLLARRLWNNPRINAASALLYMSFGLIAGQAGYANLDPQFTLWVNLSMVAVWFAIDNRTPRARLGGWALLGVACGMGLMTKGFLALLLPVLIALPYMLWQRRFGELVRYGLVAVVVCALVSLPWVLAVHYREPDFWRFFFWHEHIRRFAAGDDAQHARPWWFYLPLLFASTLPWALLLPSTLLRMWREKREAKMAYLALWFLLPLAFFSLSSGKLPTYIMPCLLPVALLMGQTVVKWLDQRSGRFLRLNGVFNTVLASVALVALLYLQATKEIYENTEMFSLSLAYIVVVGWIIANALQVLRPLTLWAMPALGIGLLVALLPAAMPAQIVNSKMPDQFIAEHQRELSETASLLSNDLGAASALAWRLKRPQVDLFNTIGELKYGLEDPAMEARKVTMDGVGQWMTEARKKGAVGVVLRVNSTQEEQEVELLPVDGKHYRRGNLHIFIFAQKQP.

Helical transmembrane passes span 27-47 (GLIL…GLWI), 98-120 (LFGV…YLLA), 129-149 (INAA…QAGY), 151-171 (NLDP…WFAI), 194-214 (LMTK…PYML), 225-245 (YGLV…LAVH), 275-295 (PWWF…LLLP), 311-331 (AYLA…SGKL), 334-354 (YIMP…VKWL), 366-386 (GVFN…LQAT), 396-416 (FSLS…ALQV), and 420-440 (LTLW…LPAA).

Belongs to the glycosyltransferase 83 family.

The protein localises to the cell inner membrane. It catalyses the reaction 4-amino-4-deoxy-alpha-L-arabinopyranosyl di-trans,octa-cis-undecaprenyl phosphate + lipid IVA = lipid IIA + di-trans,octa-cis-undecaprenyl phosphate.. It participates in lipopolysaccharide metabolism; 4-amino-4-deoxy-beta-L-arabinose-lipid A biosynthesis. Its function is as follows. Catalyzes the transfer of the L-Ara4N moiety of the glycolipid undecaprenyl phosphate-alpha-L-Ara4N to lipid A. The modified arabinose is attached to lipid A and is required for resistance to polymyxin and cationic antimicrobial peptides. In Pseudomonas fluorescens (strain Pf0-1), this protein is Undecaprenyl phosphate-alpha-4-amino-4-deoxy-L-arabinose arabinosyl transferase 1.